Reading from the N-terminus, the 89-residue chain is Large ribosomal subunit protein bL27 (89 aa).

A disordered region spans residues Met-1–Val-23.

Belongs to the bacterial ribosomal protein bL27 family.

This chain is Large ribosomal subunit protein bL27, found in Mesorhizobium japonicum (strain LMG 29417 / CECT 9101 / MAFF 303099) (Mesorhizobium loti (strain MAFF 303099)).